We begin with the raw amino-acid sequence, 264 residues long: Apolipoprotein A-I (264 aa).

The signal sequence occupies residues 1–18 (MKAVVLAVALVFLTGSQA). A run of 2 repeats spans residues 67 to 88 (LNLL…ERLG) and 89 to 110 (PLTR…QEMN). The 10 X approximate tandem repeats stretch occupies residues 67 to 264 (LNLLENWDTL…DKASETLTAQ (198 aa)). A Methionine sulfoxide modification is found at Met109. The 3; half-length repeat unit spans residues 111 to 121 (KDLEEVKQKVQ). 3 consecutive repeat copies span residues 122–143 (PYLD…QKVA), 144–165 (PLGA…GRLS), and 166–187 (PVAE…TQLA). One copy of the 7; truncated repeat lies at 188 to 207 (PHSEQMRESLAQRLAELKSN). Met193 bears the Methionine sulfoxide mark. Repeat unit 8 spans residues 208–229 (PTLNEYHTRAKTHLKTLGEKAR). One copy of the 9; half-length repeat lies at 230–240 (PALEDLRHSLM). A methionine sulfoxide mark is found at Met240 and Met242. The stretch at 241 to 264 (PMLETLKTQVQSVIDKASETLTAQ) is repeat 10.

The protein belongs to the apolipoprotein A1/A4/E family. As to quaternary structure, homodimer. Interacts with APOA1BP and CLU. Component of a sperm activating protein complex (SPAP), consisting of APOA1, an immunoglobulin heavy chain, an immunoglobulin light chain and albumin. Interacts with NDRG1. Interacts with SCGB3A2. Interacts with NAXE and YJEFN3. In terms of processing, glycosylated. Post-translationally, palmitoylated. May be acylated. In terms of processing, phosphorylation sites are present in the extracellular medium. Major protein of plasma HDL, also found in chylomicrons.

The protein localises to the secreted. Functionally, participates in the reverse transport of cholesterol from tissues to the liver for excretion by promoting cholesterol efflux from tissues and by acting as a cofactor for the lecithin cholesterol acyltransferase (LCAT). As part of the SPAP complex, activates spermatozoa motility. This is Apolipoprotein A-I (Apoa1) from Mus musculus (Mouse).